We begin with the raw amino-acid sequence, 502 residues long: Hexokinase-2 (502 aa).

A helical transmembrane segment spans residues 4-24 (VAVATTVVCSVAVCAAAALIV). The Hexokinase domain occupies 35–487 (ARVIEILKAF…SGVGAALLAA (453 aa)). The segment at 90-228 (SGDETGFFYA…GLDMLVAALV (139 aa)) is hexokinase small subdomain. Gly104, Thr105, and Asn106 together coordinate ADP. D-glucose-binding residues include Thr194, Lys195, Asn229, and Asp230. Residues 229–476 (NDTIGTLAGG…ESVEVILSND (248 aa)) form a hexokinase large subdomain region. Thr253 lines the ADP pocket. D-glucose-binding residues include Asn256, Glu284, and Glu315. Gly441 is an ADP binding site.

Belongs to the hexokinase family. As to expression, highly expressed in siliques, at intermediate levels in roots and flowers, and at lower levels in stems, rosette and cauline leaves.

The protein resides in the mitochondrion outer membrane. It carries out the reaction a D-hexose + ATP = a D-hexose 6-phosphate + ADP + H(+). The catalysed reaction is D-fructose + ATP = D-fructose 6-phosphate + ADP + H(+). It catalyses the reaction D-glucose + ATP = D-glucose 6-phosphate + ADP + H(+). It participates in carbohydrate metabolism; hexose metabolism. It functions in the pathway carbohydrate degradation; glycolysis; D-glyceraldehyde 3-phosphate and glycerone phosphate from D-glucose: step 1/4. Fructose and glucose phosphorylating enzyme. May be involved in the phosphorylation of glucose during the export from mitochondrion to cytosol. Acts as a sugar sensor which may regulate sugar-dependent gene repression or activation. Mediates the effects of sugar on plant growth and development independently of its catalytic activity or the sugar metabolism. May regulate the execution of program cell death in plant cells. This Arabidopsis thaliana (Mouse-ear cress) protein is Hexokinase-2 (HXK2).